The sequence spans 328 residues: Phosphate acyltransferase (328 aa).

It belongs to the PlsX family. Homodimer. Probably interacts with PlsY.

It localises to the cytoplasm. The enzyme catalyses a fatty acyl-[ACP] + phosphate = an acyl phosphate + holo-[ACP]. Its pathway is lipid metabolism; phospholipid metabolism. Functionally, catalyzes the reversible formation of acyl-phosphate (acyl-PO(4)) from acyl-[acyl-carrier-protein] (acyl-ACP). This enzyme utilizes acyl-ACP as fatty acyl donor, but not acyl-CoA. The protein is Phosphate acyltransferase of Mycoplasmoides gallisepticum (strain R(low / passage 15 / clone 2)) (Mycoplasma gallisepticum).